We begin with the raw amino-acid sequence, 221 residues long: Peroxiredoxin 2 (221 aa).

A Thioredoxin domain is found at 15 to 170; that stretch reads PQIGAPAPDF…IIRIIDALQT (156 aa). Cysteine 56 serves as the catalytic Cysteine sulfenic acid (-SOH) intermediate. Arginine 133 contributes to the substrate binding site. A disulfide bridge connects residues cysteine 211 and cysteine 217.

It belongs to the peroxiredoxin family. Prx6 subfamily. As to quaternary structure, homodecamer. Pentamer of dimers that assemble into a ring structure.

The protein localises to the cytoplasm. The enzyme catalyses a hydroperoxide + [thioredoxin]-dithiol = an alcohol + [thioredoxin]-disulfide + H2O. Its function is as follows. Thiol-specific peroxidase that catalyzes the reduction of hydrogen peroxide and organic hydroperoxides to water and alcohols, respectively. Plays a role in cell protection against oxidative stress by detoxifying peroxides. This chain is Peroxiredoxin 2, found in Caldanaerobacter subterraneus subsp. tengcongensis (strain DSM 15242 / JCM 11007 / NBRC 100824 / MB4) (Thermoanaerobacter tengcongensis).